The sequence spans 457 residues: Phosphoglucosamine mutase (457 aa).

Residue Ser103 is the Phosphoserine intermediate of the active site. Residues Ser103, Asp245, Asp247, and Asp249 each coordinate Mg(2+). Phosphoserine is present on Ser103.

It belongs to the phosphohexose mutase family. Requires Mg(2+) as cofactor. Post-translationally, activated by phosphorylation.

It catalyses the reaction alpha-D-glucosamine 1-phosphate = D-glucosamine 6-phosphate. In terms of biological role, catalyzes the conversion of glucosamine-6-phosphate to glucosamine-1-phosphate. This Syntrophotalea carbinolica (strain DSM 2380 / NBRC 103641 / GraBd1) (Pelobacter carbinolicus) protein is Phosphoglucosamine mutase.